Reading from the N-terminus, the 100-residue chain is Large ribosomal subunit protein bL21 (100 aa).

It belongs to the bacterial ribosomal protein bL21 family. Part of the 50S ribosomal subunit. Contacts protein L20.

Functionally, this protein binds to 23S rRNA in the presence of protein L20. The sequence is that of Large ribosomal subunit protein bL21 from Mycoplasma capricolum subsp. capricolum (strain California kid / ATCC 27343 / NCTC 10154).